Reading from the N-terminus, the 183-residue chain is MKLLSLVAVVGCLLVPPAEANKSSEDIRCKCICPPYRNISGHIYNQNVSQKDCNCLHVVEPMPVPGHDVEAYCLLCECRYEERSTTTIKVIIVIYLSVVGALLLYMAFLMLVDPLIRKPDAYTEQLHNEEENEDARSMAAAAASLGGPRANTVLERVEGAQQRWKLQVQEQRKTVFDRHKMLS.

The N-terminal stretch at 1–20 (MKLLSLVAVVGCLLVPPAEA) is a signal peptide. N-linked (GlcNAc...) asparagine glycans are attached at residues asparagine 21, asparagine 38, and asparagine 47. Topologically, residues 21–89 (NKSSEDIRCK…YEERSTTTIK (69 aa)) are extracellular. The chain crosses the membrane as a helical span at residues 90–110 (VIIVIYLSVVGALLLYMAFLM). Residues 111-183 (LVDPLIRKPD…TVFDRHKMLS (73 aa)) lie on the Cytoplasmic side of the membrane. Phosphoserine is present on residues serine 137 and serine 144.

This sequence belongs to the TMEM9 family. As to quaternary structure, interacts with the v-ATPase accessory protein ATP6AP2 and with the v-ATPase complex subunit ATP6V0D1; these interactions lead to the assembly of the v-ATPase complex. In terms of processing, N-glycosylated. In terms of tissue distribution, highly expressed in adrenal gland, thyroid gland, testis, ovary and prostate. Moderate expression in trachea, spinal cord, stomach, colon, small intestine and spleen. Low expression in bone marrow, lymph node, thymus and peripheral blood lymphocytes. Expression is detected in hematopoietic cell lines including those of myeloid, erythroid, B- and T-cell origin.

Its subcellular location is the lysosome membrane. It is found in the late endosome membrane. The protein localises to the endosome. It localises to the multivesicular body membrane. Its function is as follows. Transmembrane protein that binds to and facilitates the assembly of lysosomal proton-transporting V-type ATPase (v-ATPase), resulting in enhanced lysosomal acidification and trafficking. By bringing the v-ATPase accessory protein ATP6AP2 and the v-ATPase subunit ATP6V0D1 together, allows v-ATPase complex formation and activation. TMEM9-controlled vesicular acidification induces hyperactivation of Wnt/beta-catenin signaling, involved in development, tissue homeostasis and tissue regeneration, through lysosomal degradation of adenomatous polyposis coli/APC. In the liver, involved in hepatic regeneration. The polypeptide is Proton-transporting V-type ATPase complex assembly regulator TMEM9 (Homo sapiens (Human)).